The following is a 154-amino-acid chain: Probable chemoreceptor glutamine deamidase CheD (154 aa).

Belongs to the CheD family.

It carries out the reaction L-glutaminyl-[protein] + H2O = L-glutamyl-[protein] + NH4(+). In terms of biological role, probably deamidates glutamine residues to glutamate on methyl-accepting chemotaxis receptors (MCPs), playing an important role in chemotaxis. This chain is Probable chemoreceptor glutamine deamidase CheD, found in Methanococcus maripaludis (strain C6 / ATCC BAA-1332).